A 39-amino-acid chain; its full sequence is Cytochrome b559 subunit beta (39 aa).

A helical membrane pass occupies residues 14-30 (WLAVHGLAVPTVFFLGS). H18 is a binding site for heme.

The protein belongs to the PsbE/PsbF family. As to quaternary structure, heterodimer of an alpha subunit and a beta subunit. PSII is composed of 1 copy each of membrane proteins PsbA, PsbB, PsbC, PsbD, PsbE, PsbF, PsbH, PsbI, PsbJ, PsbK, PsbL, PsbM, PsbT, PsbX, PsbY, PsbZ, Psb30/Ycf12, at least 3 peripheral proteins of the oxygen-evolving complex and a large number of cofactors. It forms dimeric complexes. Heme b serves as cofactor.

It localises to the plastid. The protein localises to the chloroplast thylakoid membrane. This b-type cytochrome is tightly associated with the reaction center of photosystem II (PSII). PSII is a light-driven water:plastoquinone oxidoreductase that uses light energy to abstract electrons from H(2)O, generating O(2) and a proton gradient subsequently used for ATP formation. It consists of a core antenna complex that captures photons, and an electron transfer chain that converts photonic excitation into a charge separation. The protein is Cytochrome b559 subunit beta of Cedrus deodara (Deodar cedar).